Here is a 938-residue protein sequence, read N- to C-terminus: Kexin (938 aa).

The first 20 residues, Met-1 to Gln-20, serve as a signal peptide directing secretion. Residues Asn-41 and Asn-193 are each glycosylated (N-linked (GlcNAc...) asparagine). Residues Gln-179–Val-489 enclose the Peptidase S8 domain. Catalysis depends on charge relay system residues Asp-213 and His-251. 2 disulfides stabilise this stretch: Cys-267/Cys-414 and Cys-359/Cys-389. Ser-422 (charge relay system) is an active-site residue. Residues Asn-441, Asn-512, Asn-539, and Asn-599 are each glycosylated (N-linked (GlcNAc...) asparagine). A P/Homo B domain is found at Val-498–Asp-647. A disordered region spans residues Glu-671–Lys-768. The segment covering Ser-677–Ser-691 has biased composition (low complexity). Residues Lys-711–Pro-735 are compositionally biased toward polar residues. The segment covering Ser-740–Asn-762 has biased composition (acidic residues). Residues Gly-775–Phe-795 traverse the membrane as a helical segment. Over His-796–Asp-924 the chain is Cytoplasmic. Basic residues predominate over residues Thr-798–Arg-808. A disordered region spans residues Thr-798–Gln-938. The span at Asp-820–Phe-831 shows a compositional bias: acidic residues. A compositionally biased stretch (basic and acidic residues) spans Asp-832 to Gln-849. Positions Arg-850 to Arg-859 are enriched in low complexity. Over residues Gln-860–Asp-874 the composition is skewed to basic and acidic residues. A compositionally biased stretch (polar residues) spans Gln-902 to Thr-919. Residues Lys-921–Gln-938 show a composition bias toward basic and acidic residues.

The protein belongs to the peptidase S8 family. Furin subfamily. Ca(2+) is required as a cofactor. O-glycosylated.

It is found in the golgi apparatus. Its subcellular location is the trans-Golgi network membrane. It carries out the reaction Cleavage of -Lys-Arg-|-Xaa- and -Arg-Arg-|-Xaa- bonds to process yeast alpha-factor pheromone and killer toxin precursors.. This is Kexin (KEX2) from Candida albicans (strain WO-1) (Yeast).